We begin with the raw amino-acid sequence, 301 residues long: Protein FdhE homolog (301 aa).

It belongs to the FdhE family.

It is found in the cytoplasm. In terms of biological role, necessary for formate dehydrogenase activity. This Shewanella baltica (strain OS195) protein is Protein FdhE homolog.